The following is a 313-amino-acid chain: Protein ABA AND ROS SENSITIVE 1 (313 aa).

Residues 5–12 carry the Nuclear localization signal 1 motif; the sequence is AKKKAMFR. Residues 39 to 61 form a C2H2-type zinc finger; that stretch reads CRVCNVVLKSESLWDVHQASRKH. The segment covering 115–131 has biased composition (basic and acidic residues); sequence ARAEVEPAKSKNLEQSK. Disordered regions lie at residues 115 to 189, 232 to 254, and 271 to 313; these read ARAE…LPTG, MEEE…QRSY, and ARLA…AQHL. Residues 155–176 are compositionally biased toward polar residues; the sequence is TDSSNTKTTSEPKQSQTQTTGP. Positions 232 to 248 are enriched in acidic residues; sequence MEEEEVDAAETIEEEEQ. The stretch at 232–271 forms a coiled coil; that stretch reads MEEEEVDAAETIEEEEQREQRSYKEKVEILKRKKMELKAA. A Nuclear localization signal 2 motif is present at residues 274-281; sequence AKRSKTSE. A compositionally biased stretch (acidic residues) spans 293-305; that stretch reads ESPSDEEDDEDSA.

As to expression, mostly expressed in siliques and, to a lower extent, in roots. Barely deteclable in leaves and stems.

Its subcellular location is the nucleus. It localises to the cytoplasm. In terms of biological role, essential for breaking seed dormancy before seed germination. Prevents reactive oxygen species (ROS) accumulation in response to abscisic acid (ABA) and oxidative stress, probably by repressing the accumulation of ABA-induced ROS-scavenging enzymes (e.g. CSD3). This chain is Protein ABA AND ROS SENSITIVE 1, found in Arabidopsis thaliana (Mouse-ear cress).